We begin with the raw amino-acid sequence, 238 residues long: MSSPITPLSPGCVMLPARPEPLPVDPKTTAVIVIDMQNAYASPGGYLDLAGFDISGAAKVTHEIKGVLEVARSAGMTVIYFQNGWDDGYVEAGGPGSPNWWKSNALKTMRARPELQGKLLARGQWDYELVDDLTPQPGDIRLHKTRYSGFFNSQLDSVLRARGIRHLVFTGIATNVCVESTLRDGFMLEYFGTVLEDATHQAGPDFVQKAALFNIETFFGWVSTTADFKGTFGQLAPG.

The active-site Proton acceptor is aspartate 35. The active site involves lysine 144. The Nucleophile role is filled by cysteine 177.

Belongs to the isochorismatase family. RutB subfamily.

The catalysed reaction is (Z)-3-ureidoacrylate + H2O + H(+) = (Z)-3-aminoacrylate + NH4(+) + CO2. It catalyses the reaction (Z)-3-ureidoacrylate + H2O = (Z)-3-aminoacrylate + carbamate + H(+). The enzyme catalyses (Z)-2-methylureidoacrylate + H2O + H(+) = (Z)-2-methylaminoacrylate + NH4(+) + CO2. Hydrolyzes ureidoacrylate to form aminoacrylate and carbamate. The carbamate hydrolyzes spontaneously, thereby releasing one of the nitrogen atoms of the pyrimidine ring as ammonia and one of its carbon atoms as CO2. The sequence is that of Ureidoacrylate amidohydrolase RutB from Caulobacter vibrioides (strain NA1000 / CB15N) (Caulobacter crescentus).